We begin with the raw amino-acid sequence, 537 residues long: Cytochrome P450 86A8 (537 aa).

A helical membrane pass occupies residues 3–23; the sequence is ISTALMILSAITAYFLWLTFI. A heme-binding site is contributed by cysteine 458.

Belongs to the cytochrome P450 family. Heme is required as a cofactor. Expressed in leaves, stems, flowers and siliques. Expressed at low levels in roots.

The protein localises to the membrane. It carries out the reaction an organic molecule + reduced [NADPH--hemoprotein reductase] + O2 = an alcohol + oxidized [NADPH--hemoprotein reductase] + H2O + H(+). Catalyzes the omega-hydroxylation of various fatty acids (FA). Acts on saturated and unsaturated fatty acids with chain lengths from C12 to C18. May be involved in the biosynthesis of cutin in the epidermis which prevents post-genital organ fusions. Hydroxylated FAs may be important for trichome differentiation, establishment of apical dominance and senescence. This chain is Cytochrome P450 86A8 (CYP86A8), found in Arabidopsis thaliana (Mouse-ear cress).